A 110-amino-acid polypeptide reads, in one-letter code: Protein SPIRAL1-like 2 (110 aa).

Residues 28-110 form a disordered region; the sequence is AVNKTPAETE…LDYLFGGGSN (83 aa). The segment covering 40–52 has biased composition (low complexity); sequence AHAPPTQAAAANA. Positions 63–82 are enriched in polar residues; the sequence is LNSNSANNYMRAEGQNTGNF. A Phosphoserine modification is found at serine 67. A compositionally biased stretch (gly residues) spans 95–110; that stretch reads PGGGSSLDYLFGGGSN.

This sequence belongs to the SPIRAL1 family. Ubiquitous.

In terms of biological role, acts redundantly with SPR1 in maintaining the cortical microtubules organization essential for anisotropic cell growth. The sequence is that of Protein SPIRAL1-like 2 (SP1L2) from Arabidopsis thaliana (Mouse-ear cress).